The primary structure comprises 627 residues: tRNA uridine 5-carboxymethylaminomethyl modification enzyme MnmG (627 aa).

FAD-binding positions include 13-18, Val-125, and Ser-180; that span reads GGGHAG. Position 274–288 (274–288) interacts with NAD(+); sequence GPRYCPSIEDKVVRF. Gln-371 contacts FAD.

The protein belongs to the MnmG family. As to quaternary structure, homodimer. Heterotetramer of two MnmE and two MnmG subunits. The cofactor is FAD.

Its subcellular location is the cytoplasm. Its function is as follows. NAD-binding protein involved in the addition of a carboxymethylaminomethyl (cmnm) group at the wobble position (U34) of certain tRNAs, forming tRNA-cmnm(5)s(2)U34. This chain is tRNA uridine 5-carboxymethylaminomethyl modification enzyme MnmG, found in Francisella philomiragia subsp. philomiragia (strain ATCC 25017 / CCUG 19701 / FSC 153 / O#319-036).